Here is a 137-residue protein sequence, read N- to C-terminus: MKTFVLVSCLLVFTQIIYAVDIKELKIMNRILEKCIRTVPKGENDPINPLKNVNVLYCAFSKRGIFTPKGVNTKQYINYCEKTIINPADIKQCKKLISKCIKKVYDRPGPIIERSKNLLSCVLKKGVLELTVYGKKK.

Residues 1 to 19 (MKTFVLVSCLLVFTQIIYA) form the signal peptide.

Belongs to the ant venom allergen 2/4 family. As to quaternary structure, monomer. In terms of tissue distribution, expressed by the venom gland.

The protein localises to the secreted. This is Venom allergen 4 from Solenopsis geminata (Tropical fire ant).